The following is a 335-amino-acid chain: Phosphate acyltransferase (335 aa).

This sequence belongs to the PlsX family. In terms of assembly, homodimer. Probably interacts with PlsY.

Its subcellular location is the cytoplasm. The catalysed reaction is a fatty acyl-[ACP] + phosphate = an acyl phosphate + holo-[ACP]. Its pathway is lipid metabolism; phospholipid metabolism. Catalyzes the reversible formation of acyl-phosphate (acyl-PO(4)) from acyl-[acyl-carrier-protein] (acyl-ACP). This enzyme utilizes acyl-ACP as fatty acyl donor, but not acyl-CoA. In Streptococcus suis (strain 98HAH33), this protein is Phosphate acyltransferase.